The sequence spans 429 residues: Z-DNA-binding protein 1 (429 aa).

Z-binding domains are found at residues 8-70 (PGRE…CLGG) and 103-166 (PQFS…TIYR). A disordered region spans residues 68 to 107 (LGGTDPEGEGPAELALSSPAERPQQHAATIPETPGPQFSQ). 2 short sequence motifs (RIP homotypic interaction motif (RHIM)) span residues 195–219 (NSWI…RQTV) and 253–277 (DIHM…LHGV). Disordered regions lie at residues 277 to 299 (VPSE…AAGP) and 339 to 429 (KMSI…GGGI). Residues 347–358 (AGPGGVAGSGEG) show a composition bias toward gly residues. The segment covering 407–420 (KAAEGSHYVDEASH) has biased composition (basic and acidic residues).

Homodimer. Interacts (via RIP homotypic interaction motif) with RIPK3; leading to RIPK3 activation and necroptosis; interaction is enhanced by CASP6. Interacts (via RIP homotypic interaction motif) with RIPK1. Component of the AIM2 PANoptosome complex, a multiprotein complex that drives inflammatory cell death (PANoptosis). As to quaternary structure, (Microbial infection) Interacts (via RIP homotypic interaction motif/RHIM) with herpes simplex virus 1/HHV-1 protein RIR1/ICP6 (via RHIM); this interaction may induce heteromeric amyloid assemblies and prevent necroptosis activation. Interacts with human herpes simplex virus 1/HHV-1 protein ICP0. Post-translationally, phosphorylated. In terms of tissue distribution, highly expressed in lymphatic tissues including lymph node, leukocytes, tonsil, bone marrow and spleen. Expressed to a lesser extent in thymus, lung and liver.

It localises to the cytoplasm. Its subcellular location is the nucleus. ZBP1-dependent necroptosis is normally inhibited by RIPK1: RIPK1 inhibits the ZBP1-induced activation of RIPK3 via FADD-mediated recruitment of CASP8, which cleaves RIPK1 and limits TNF-induced necroptosis. Key innate sensor that recognizes and binds Z-RNA structures, which are produced by a number of viruses, such as herpesvirus, orthomyxovirus or flavivirus, and triggers different forms of cell death. ZBP1 acts as an essential mediator of pyroptosis, necroptosis and apoptosis (PANoptosis), an integral part of host defense against pathogens, by activating RIPK3, caspase-8 (CASP8), and the NLRP3 inflammasome. Key activator of necroptosis, a programmed cell death process in response to death-inducing TNF-alpha family members, via its ability to bind Z-RNA: once activated upon Z-RNA-binding, ZBP1 interacts and stimulates RIPK3 kinase, which phosphorylates and activates MLKL, triggering execution of programmed necrosis. In addition to TNF-induced necroptosis, necroptosis can also take place in the nucleus in response to orthomyxoviruses infection: ZBP1 recognizes and binds Z-RNA structures that are produced in infected nuclei by orthomyxoviruses, such as the influenza A virus (IAV), leading to ZBP1 activation, RIPK3 stimulation and subsequent MLKL phosphorylation, triggering disruption of the nuclear envelope and leakage of cellular DNA into the cytosol. ZBP1-dependent cell death in response to IAV infection promotes interleukin-1 alpha (IL1A) induction in an NLRP3-inflammasome-independent manner: IL1A expression is required for the optimal interleukin-1 beta (IL1B) production, and together, these cytokines promote infiltration of inflammatory neutrophils to the lung, leading to the formation of neutrophil extracellular traps. In addition to its direct role in driving necroptosis via its ability to sense Z-RNAs, also involved in PANoptosis triggered in response to bacterial infection: component of the AIM2 PANoptosome complex, a multiprotein complex that triggers PANoptosis. Also acts as the apical sensor of fungal infection responsible for activating PANoptosis. Involved in CASP8-mediated cell death via its interaction with RIPK1 but independently of its ability to sense Z-RNAs. In some cell types, also able to restrict viral replication by promoting cell death-independent responses. In response to Zika virus infection in neurons, promotes a cell death-independent pathway that restricts viral replication: together with RIPK3, promotes a death-independent transcriptional program that modifies the cellular metabolism via up-regulation expression of the enzyme ACOD1/IRG1 and production of the metabolite itaconate. Itaconate inhibits the activity of succinate dehydrogenase, generating a metabolic state in neurons that suppresses replication of viral genomes. Its function is as follows. (Microbial infection) In case of herpes simplex virus 1/HHV-1 infection, forms hetero-amyloid structures with HHV-1 protein RIR1/ICP6 which may inhibit ZBP1-mediated necroptosis, thereby preventing host cell death pathway and allowing viral evasion. The polypeptide is Z-DNA-binding protein 1 (Homo sapiens (Human)).